We begin with the raw amino-acid sequence, 1004 residues long: Protein Wnt-5 (1004 aa).

The first 29 residues, 1 to 29 (MSCYRKRHFLLWLLRAVCMLHLTARGAYA), serve as a signal peptide directing secretion. N-linked (GlcNAc...) asparagine glycosylation is found at Asn60, Asn66, Asn115, and Asn219. Residues 238–298 (QKDKAKTSGA…NPGEQPIGGY (61 aa)) are disordered. N-linked (GlcNAc...) asparagine glycosylation is found at Asn307 and Asn341. Residues 310–407 (LLKPTDTDSH…ERDEWFRGQS (98 aa)) form a disordered region. Over residues 389–403 (RREEQQRQRERDEWF) the composition is skewed to basic and acidic residues. N-linked (GlcNAc...) asparagine glycosylation is present at Asn422. Positions 438–472 (KVSSEGSDGELLSRVERSQPSISSSSSSSSSSSRK) are disordered. A compositionally biased stretch (low complexity) spans 458 to 470 (SISSSSSSSSSSS). N-linked (GlcNAc...) asparagine glycans are attached at residues Asn484, Asn485, Asn528, and Asn593. Disulfide bonds link Cys583–Cys594, Cys633–Cys641, and Cys643–Cys661. The N-linked (GlcNAc...) asparagine glycan is linked to Asn724. Positions 790–822 (FFKGEQQPRKKKRKNQRAAADAPAYPRNGIKES) are disordered. 8 disulfides stabilise this stretch: Cys862/Cys876, Cys864/Cys871, Cys933/Cys964, Cys949/Cys959, Cys963/Cys1003, Cys979/Cys994, Cys981/Cys991, and Cys986/Cys987. Residue Ser868 is the site of O-palmitoleoyl serine; by PORCN attachment. N-linked (GlcNAc...) asparagine glycosylation occurs at Asn952.

The protein belongs to the Wnt family. Interacts with porcupine (por). In terms of processing, glycosylated, glycosylation is stimulated by porcupine at the ER. Post-translationally, palmitoleoylated by porcupine. The lipid group functions as a sorting signal, targeting the ligand to polarized vesicles that transport Wnt5 to unique sites at the cell surface. Depalmitoleoylated by notum, leading to inhibit Wnt signaling pathway. In terms of tissue distribution, dynamic expression pattern during embryogenesis. Expression is seen in the limb primordia of the head and thoracic segments, mesodermal and neurogenic regions.

The protein localises to the secreted. It localises to the extracellular space. The protein resides in the extracellular matrix. In terms of biological role, binds as a ligand to a family of frizzled seven-transmembrane receptors and acts through a cascade of genes on the nucleus. Probable developmental protein. May be a signaling molecule which affects the development of discrete regions of tissues. Is likely to signal over only few cell diameters. May have a role in limb and CNS development; may be a downstream target of Dll that acts in the specification of these primordia. The sequence is that of Protein Wnt-5 (Wnt5) from Drosophila melanogaster (Fruit fly).